Reading from the N-terminus, the 407-residue chain is Probable sodium/metabolite cotransporter BASS5, chloroplastic (407 aa).

The transit peptide at 1 to 57 (MGVISPTETLFLKSQHRLLQPRNYSYALAFHSTRRVANFPRNSFSSLGSCSVDFPLR) directs the protein to the chloroplast. 9 helical membrane passes run 101–121 (FIPHGILLSTILALVYPPSFT), 122–142 (WFKPRYFVPGLGFMMFAVGIN), 162–184 (YIGQYLIKPLLGYIFGVIAVSLF), 191–213 (GAGIMLVSCVSGAQLSNYTTFLT), 222–242 (IVMTSISTATAVLVTPMLSLL), 252–272 (VFGMISSILQVVITPIAAGLL), 286–306 (PFLPALTVIDMSCCIGAPLAL), 317–337 (ATILFLVITFHLLAFVAGYFF), and 379–399 (LVGVPPAISTVVMSLMGVSLV).

The protein belongs to the bile acid:sodium symporter (BASS) (TC 2.A.28) family. In terms of tissue distribution, widely expressed.

The protein resides in the membrane. Its subcellular location is the plastid. The protein localises to the chloroplast envelope. Its function is as follows. Plastidic transporter involved in the biosynthesis of aliphatic glucosinolates by translocating the biosynthetic intermediates of Met-derived glucosinolates across chloroplast membranes. Transports short chain (C2) alpha-keto acids, such as 4-methylsulfanyl-2-oxobutanoic acid, from the cytosol to the chloroplast where they are subjected to chain elongation cycles. Also functions in the transport of chain-elongated (C3 to C8) Met derivatives from the chloroplast to the cytosol. Does not seem to be involved in the transport of indole-derived glucosinolates. The protein is Probable sodium/metabolite cotransporter BASS5, chloroplastic (BASS5) of Arabidopsis thaliana (Mouse-ear cress).